The sequence spans 301 residues: Cuticle collagen 1 (301 aa).

The N-terminal stretch at 1 to 37 (METDGRLKAYKFVAYAAVGFSIAAVASVLLTLPMVYS) is a signal peptide. A furin-like endopeptidase recognition region region spans residues 79–82 (RTTR). 4 triple-helical region regions span residues 105–134 (GPPGPAGAPGKPGKPGRPGAPGTPGTPGKP), 153–179 (GPPGPPGPPGAPGDPGEAGTPGRPGTD), 183–209 (GSPGPRGPPGPAGEAGAPGPAGEPGTP), and 218–283 (GAPG…KGIC). A disordered region spans residues 109–284 (PAGAPGKPGK…GTPGEKGICP (176 aa)). Pro residues-rich tracts occupy residues 131 to 164 (PGKPPVAPCEPTTPPPCKPCPQGPPGPPGPPGAP) and 184 to 193 (SPGPRGPPGP). The segment covering 194 to 210 (AGEAGAPGPAGEPGTPA) has biased composition (low complexity). A compositionally biased stretch (pro residues) spans 226 to 258 (SGPPGPPGPPGAPGNDGPPGPPGPKGAPGPDGP).

This sequence belongs to the cuticular collagen family. Collagen polypeptide chains are complexed within the cuticle by disulfide bonds and other types of covalent cross-links.

Its subcellular location is the secreted. The protein resides in the extracellular space. In terms of biological role, secreted collagen that forms part of the nematode cuticle, which functions as an exoskeleton and a barrier to protect the worm from its environment. Secretion and subsequent incorporation into the cuticle is likely mediated by bli-4, which probably cleaves at the N-terminal consensus furin cleavage site. In Caenorhabditis elegans, this protein is Cuticle collagen 1 (sqt-3).